The following is a 72-amino-acid chain: ADVPGNYPLDTRGYSYYCTILGENEFCKKICKVHGVSYGYCYNSGCWCEYLEAKDVSVWNAAKNYCKNPVGK.

The 64-residue stretch at 4 to 67 (PGNYPLDTRG…VWNAAKNYCK (64 aa)) folds into the LCN-type CS-alpha/beta domain. 3 disulfide bridges follow: cysteine 18-cysteine 41, cysteine 27-cysteine 46, and cysteine 31-cysteine 48.

This sequence belongs to the long (3 C-C) scorpion toxin superfamily. Sodium channel inhibitor family. Beta subfamily. Expressed by the venom gland.

The protein localises to the secreted. Binds to sodium channels (Nav) and affects the channel activation process. The chain is Toxin Acra II-3 from Androctonus crassicauda (Arabian fat-tailed scorpion).